Here is a 101-residue protein sequence, read N- to C-terminus: Gamma-secretase subunit PEN-2 (101 aa).

The Cytoplasmic portion of the chain corresponds to 1–17 (MNLERIPNEEKLSLCRR). An intramembrane region (helical) is located at residues 18–36 (YYLGGFAFLPFLWLVNILW). The Cytoplasmic portion of the chain corresponds to 37–57 (FFKEAFLKPAYTEQPQIKSYV). Residues 58-78 (KKSALGLLLWVAVLTTWITVF) form a helical membrane-spanning segment. Topologically, residues 79 to 101 (QHFRAQWGEVGDYLSFTIPLGTA) are lumenal.

The protein belongs to the PEN-2 family. As to quaternary structure, the functional gamma-secretase complex is composed of at least four polypeptides: a presenilin homodimer (psen1 or psen2), nicastrin (ncstn), aph1 (aph1a or aph1b) and psenen.

The protein localises to the endoplasmic reticulum membrane. Its subcellular location is the golgi apparatus. The protein resides in the golgi stack membrane. It is found in the cell membrane. It localises to the membrane. Functionally, essential subunit of the gamma-secretase complex, an endoprotease complex that catalyzes the intramembrane cleavage of integral membrane proteins such as Notch receptors and APP (amyloid-beta precursor protein). The gamma-secretase complex plays a role in Notch and Wnt signaling cascades and regulation of downstream processes via its role in processing key regulatory proteins. This is Gamma-secretase subunit PEN-2 (psenen) from Danio rerio (Zebrafish).